We begin with the raw amino-acid sequence, 507 residues long: ATP synthase subunit alpha, chloroplastic (507 aa).

170 to 177 (GDRQTGKT) is a binding site for ATP.

This sequence belongs to the ATPase alpha/beta chains family. In terms of assembly, F-type ATPases have 2 components, CF(1) - the catalytic core - and CF(0) - the membrane proton channel. CF(1) has five subunits: alpha(3), beta(3), gamma(1), delta(1), epsilon(1). CF(0) has four main subunits: a, b, b' and c.

The protein resides in the plastid. Its subcellular location is the chloroplast thylakoid membrane. It carries out the reaction ATP + H2O + 4 H(+)(in) = ADP + phosphate + 5 H(+)(out). In terms of biological role, produces ATP from ADP in the presence of a proton gradient across the membrane. The alpha chain is a regulatory subunit. In Physcomitrium patens (Spreading-leaved earth moss), this protein is ATP synthase subunit alpha, chloroplastic.